The sequence spans 1133 residues: Probable cation-transporting ATPase 9 (1133 aa).

Over 1-6 the chain is Cytoplasmic; it reads MRVSSI. Residues 7 to 28 form a helical membrane-spanning segment; it reads EAEMENPIDVDKTDVEGELKIK. The Extracellular segment spans residues 29-34; it reads QVTLLR. Residues 35–53 form a helical membrane-spanning segment; it reads ENIVKKIVFFLVAIFCSDR. Over 54-167 the chain is Cytoplasmic; the sequence is PSVLKKVFYE…IEINVPSFLT (114 aa). Residues 168-190 form a helical membrane-spanning segment; sequence LMWREFKKPINFLLYFGIIVWGI. The Extracellular portion of the chain corresponds to 191-193; that stretch reads EQM. The helical transmembrane segment at 194-212 threads the bilayer; it reads YVSTAITVVFTTTINSLIC. The Cytoplasmic segment spans residues 213–363; that stretch reads IYIRGVMQKL…PFNKKFQQQA (151 aa). Residues 364–383 traverse the membrane as a helical segment; that stretch reads VKLTILMATLLLIGFLSTLS. Residues 384–396 lie on the Extracellular side of the membrane; sequence RLLDIELPPLFIA. A helical membrane pass occupies residues 397–418; sequence FRFLDILIYSAPPGMPMLIAIT. Residues 419–887 are Cytoplasmic-facing; it reads NFVGLKRLKN…NSVEIFKGYL (469 aa). Residue Asp451 is the 4-aspartylphosphate intermediate of the active site. The Mg(2+) site is built by Asp827 and Asp831. Residues 888-906 traverse the membrane as a helical segment; that stretch reads QVALLRYLGFLTLAYFYSS. The Extracellular segment spans residues 907–915; that stretch reads YSSGQMDWQ. Residues 916-931 form a helical membrane-spanning segment; the sequence is ALASGYFLVYLILGCN. The Cytoplasmic segment spans residues 932-948; that stretch reads TPLKKLEKSVFDDNLFS. The chain crosses the membrane as a helical span at residues 949 to 972; it reads IYNVTSVLFGFTLHILSIVGCVES. Residues 973-994 lie on the Extracellular side of the membrane; the sequence is LHASPIYKEVNSLDAENNFQFE. The helical transmembrane segment at 995-1018 threads the bilayer; the sequence is TQHNTVLNFNILINFFYVIISNHI. Residues 1019–1030 are Cytoplasmic-facing; sequence GKPMKDRYYKNT. The chain crosses the membrane as a helical span at residues 1031-1050; sequence IAIYYDLGLIYTCKCMILQV. Residues 1051–1101 lie on the Extracellular side of the membrane; it reads LLILEHTHHGLIFLILLLDQEFSSSLTVQVYFSLPMNLFLPEEFSLNFTQE. The chain crosses the membrane as a helical span at residues 1102–1124; sequence VKKEKELLICNSSSTILEVDYNL. The Cytoplasmic segment spans residues 1125–1133; that stretch reads RLNYFQQNF.

This sequence belongs to the cation transport ATPase (P-type) (TC 3.A.3) family. Type V subfamily.

Its subcellular location is the membrane. It catalyses the reaction ATP + H2O = ADP + phosphate + H(+). The protein is Probable cation-transporting ATPase 9 (TPA9) of Tetrahymena thermophila.